We begin with the raw amino-acid sequence, 292 residues long: Probable 2-(5''-triphosphoribosyl)-3'-dephosphocoenzyme-A synthase (292 aa).

This sequence belongs to the CitG/MdcB family.

It catalyses the reaction 3'-dephospho-CoA + ATP = 2'-(5''-triphospho-alpha-D-ribosyl)-3'-dephospho-CoA + adenine. This Shigella flexneri protein is Probable 2-(5''-triphosphoribosyl)-3'-dephosphocoenzyme-A synthase.